The sequence spans 26 residues: Dermaseptin-J1 (26 aa).

Val-26 is subject to Valine amide.

Expressed by the skin glands.

The protein resides in the secreted. Its function is as follows. Has antimicrobial activity. The polypeptide is Dermaseptin-J1 (Phasmahyla jandaia (Jandaia leaf frog)).